We begin with the raw amino-acid sequence, 298 residues long: 3'-5' exonuclease crn-4 (298 aa).

An Exonuclease domain is found at 12–192 (LILDFETTSD…DDCLNIATIL (181 aa)). Mg(2+)-binding residues include Asp-15, Glu-17, and Asp-184. 4 residues coordinate Zn(2+): Cys-210, Cys-260, Cys-263, and Cys-270.

Homodimer (via C-terminus). Interacts with crn-5; interaction promotes the DNase activity of crn-4. Interacts with cps-6, crn-1 and cyn-13. The cofactor is Mg(2+).

Its activity is regulated as follows. Exonuclease activity is inhibited in vitro by pontacyl violet 6R (PV6R), p-chloromercuriphenyl sulfonate (PCMPS), 5,5'-dithiobis(2-nitrobenzoic acid) (DTNB), aurintricarboxylic acid (ATA), 2-morpholin-4-ylethanesulfonate (MES), 4-[(4,6-dichloro-1,3,5-triazin-2-yl)amino]-2-(3-hydroxy-6-oxoxanthen-9-yl)benzoic acid (DR396) and fmoc-d-Cha-OH (FDCO). Interaction with ssRNA is reduced in vitro by PV6R. In terms of biological role, possesses 3'-&gt;5' exoribonuclease activity in digestion of DNA and RNA. Cleaves nucleic acid substrates with efficiencies in the following order: single-stranded RNA (ssRNA) &gt; double-stranded DNA (dsDNA) &gt; single-stranded DNA (ssDNA). Involved in apoptotic DNA degradation. In Caenorhabditis elegans, this protein is 3'-5' exonuclease crn-4 (crn-4).